The sequence spans 132 residues: Fatty acid-binding protein, brain (132 aa).

Residue Val2 is modified to N-acetylvaline. Residue 127–129 participates in a fatty acid binding; that stretch reads RHY.

The protein belongs to the calycin superfamily. Fatty-acid binding protein (FABP) family. As to quaternary structure, monomer.

Its subcellular location is the cytoplasm. In terms of biological role, FABPs are thought to play a role in the intracellular transport of long-chain fatty acids and their acyl-CoA esters. Binds oleic and palmitic acids but not palmitoyl CoA. The sequence is that of Fatty acid-binding protein, brain (FABP7) from Bos taurus (Bovine).